Here is a 49-residue protein sequence, read N- to C-terminus: Small, acid-soluble spore protein K (49 aa).

A disordered region spans residues 1–49 (MRNKAKGFPNQVNHKFEGEPGATDAYASKRPNGETNTRPQERMRASGKR). Residues 39 to 49 (PQERMRASGKR) are compositionally biased toward basic and acidic residues.

Belongs to the SspK family.

Its subcellular location is the spore core. The polypeptide is Small, acid-soluble spore protein K (Bacillus pumilus (strain SAFR-032)).